Reading from the N-terminus, the 89-residue chain is Small ribosomal subunit protein uS15 (89 aa).

It belongs to the universal ribosomal protein uS15 family. In terms of assembly, part of the 30S ribosomal subunit. Forms a bridge to the 50S subunit in the 70S ribosome, contacting the 23S rRNA.

Its function is as follows. One of the primary rRNA binding proteins, it binds directly to 16S rRNA where it helps nucleate assembly of the platform of the 30S subunit by binding and bridging several RNA helices of the 16S rRNA. Forms an intersubunit bridge (bridge B4) with the 23S rRNA of the 50S subunit in the ribosome. In Mycobacterium marinum (strain ATCC BAA-535 / M), this protein is Small ribosomal subunit protein uS15.